Reading from the N-terminus, the 337-residue chain is Anthranilate phosphoribosyltransferase (337 aa).

Residues Gly-82, 85–86 (GD), Thr-90, 92–95 (NIST), 110–118 (KHGGRSVSS), and Ser-122 each bind 5-phospho-alpha-D-ribose 1-diphosphate. Anthranilate is bound at residue Gly-82. Ser-94 is a Mg(2+) binding site. Arg-168 provides a ligand contact to anthranilate. Asp-226 and Glu-227 together coordinate Mg(2+).

It belongs to the anthranilate phosphoribosyltransferase family. Homodimer. Requires Mg(2+) as cofactor.

It carries out the reaction N-(5-phospho-beta-D-ribosyl)anthranilate + diphosphate = 5-phospho-alpha-D-ribose 1-diphosphate + anthranilate. It functions in the pathway amino-acid biosynthesis; L-tryptophan biosynthesis; L-tryptophan from chorismate: step 2/5. Its function is as follows. Catalyzes the transfer of the phosphoribosyl group of 5-phosphorylribose-1-pyrophosphate (PRPP) to anthranilate to yield N-(5'-phosphoribosyl)-anthranilate (PRA). This is Anthranilate phosphoribosyltransferase from Francisella tularensis subsp. tularensis (strain WY96-3418).